The following is a 381-amino-acid chain: Creatine kinase M-type (381 aa).

Residues 11–98 form the Phosphagen kinase N-terminal domain; it reads KLNYKPEEEY…FDPIIQDRHG (88 aa). Residues 125-367 form the Phosphagen kinase C-terminal domain; sequence YVLSSRVRTG…KLMVEMEKKL (243 aa). 128–132 contributes to the ATP binding site; that stretch reads SSRVR. A Phosphoserine modification is found at serine 164. Threonine 166 is subject to Phosphothreonine. Residue serine 178 is modified to Phosphoserine. Threonine 180 carries the phosphothreonine modification. Residue histidine 191 participates in ATP binding. Serine 199 is subject to Phosphoserine. 2 residues coordinate ATP: arginine 236 and arginine 292. Phosphothreonine is present on residues threonine 313 and threonine 322. Residues 320 to 325 and aspartate 335 each bind ATP; that span reads RGTGGV. The residue at position 372 (serine 372) is a Phosphoserine.

Belongs to the ATP:guanido phosphotransferase family. Dimer of identical or non-identical chains, which can be either B (brain type) or M (muscle type). With MM being the major form in skeletal muscle and myocardium, MB existing in myocardium, and BB existing in many tissues, especially brain.

The protein localises to the cytoplasm. The catalysed reaction is creatine + ATP = N-phosphocreatine + ADP + H(+). Reversibly catalyzes the transfer of phosphate between ATP and various phosphogens (e.g. creatine phosphate). Creatine kinase isoenzymes play a central role in energy transduction in tissues with large, fluctuating energy demands, such as skeletal muscle, heart, brain and spermatozoa. The protein is Creatine kinase M-type (CKM) of Canis lupus familiaris (Dog).